The following is a 729-amino-acid chain: Zorya protein ZorA (729 aa).

Helical transmembrane passes span 20–40 (PATV…FYFF), 135–155 (LPGI…MIGL), and 177–197 (VLYA…ITWL).

It belongs to the MotA family.

It is found in the cell inner membrane. Component of antiviral defense system Zorya type I, composed of ZorA, ZorB, ZorC and ZorD. Expression of Zorya type I in E.coli (strain MG1655) confers 10,000-fold resistance to phage SECphi27, 100-fold resistance to lambda, and 10-fold resistance to T7. While most T7 infected Zorya-containing cells undergo abortive infection, a minority produce viable phage progeny. These eventually accumulate to a high multiplicity of infection, leading to culture collapse by 2 hours after initial infection. ZorA and ZorB probably assemble in the cell inner membrane and exert their effect there. This chain is Zorya protein ZorA, found in Escherichia coli O139:H28 (strain E24377A / ETEC).